The primary structure comprises 476 residues: Serine/threonine-protein kinase Chk1 (476 aa).

The Protein kinase domain occupies 9–265 (WDLVQTLGEG…IPDIKKDRWY (257 aa)). Residues 15 to 23 (LGEGAYGEV) and Lys38 each bind ATP. The active-site Proton acceptor is the Asp130. Positions 272–329 (GTKRGRVSSGGVTESPGALPKHIRSDTDFSPVKSALGEDKASYSTSQPEPGTGGALWD) are disordered. Ser280 is modified (phosphoserine; by PKB/AKT1). Phosphoserine is present on Ser296. Ser317 carries the phosphoserine; by ATM and ATR modification. A Phosphoserine modification is found at Ser345. Residues 391–476 (RSLRDVCEKM…STQKVWLPPP (86 aa)) are autoinhibitory region.

This sequence belongs to the protein kinase superfamily. CAMK Ser/Thr protein kinase family. NIM1 subfamily. Post-translationally, phosphorylated by ATR in a RAD17-dependent manner in response to ultraviolet irradiation and inhibition of DNA replication. Phosphorylated by ATM in response to ionizing irradiation. Phosphorylation at Ser-345 induces a change in the conformation of the protein and activates the kinase activity. Phosphorylation at Ser-345 also increases binding to 14-3-3 proteins and promotes nuclear retention.

It localises to the nucleus. The protein localises to the chromosome. The protein resides in the cytoplasm. It is found in the cytoskeleton. Its subcellular location is the microtubule organizing center. It localises to the centrosome. It carries out the reaction L-seryl-[protein] + ATP = O-phospho-L-seryl-[protein] + ADP + H(+). The enzyme catalyses L-threonyl-[protein] + ATP = O-phospho-L-threonyl-[protein] + ADP + H(+). Its activity is regulated as follows. Activated through phosphorylation by atr or atm in response to DNA damage or inhibition of DNA replication. Serine/threonine-protein kinase which is required for checkpoint-mediated cell cycle arrest and activation of DNA repair in response to the presence of DNA damage or unreplicated DNA. May also negatively regulate cell cycle progression during unperturbed cell cycles. This regulation is achieved by a number of mechanisms that together help to preserve the integrity of the genome. Recognizes the substrate consensus sequence [R-X-X-S/T]. Binds to and phosphorylates CDC25A, CDC25B and CDC25C. This inhibits their activity through proteasomal degradation, nucleo-cytoplasmic shuttling and inhibition by proteins of the 13-3-3 family. Inhibition of CDC25 leads to increased inhibitory tyrosine phosphorylation of CDK-cyclin complexes and blocks cell cycle progression. May promote DNA repair, regulate chromatin assembly and the transcription of genes that regulate cell-cycle progression. May also play a role in replication fork maintenance. The chain is Serine/threonine-protein kinase Chk1 (CHEK1) from Gallus gallus (Chicken).